The chain runs to 38 residues: Beta-defensin 8 (38 aa).

3 disulfides stabilise this stretch: Cys-7–Cys-36, Cys-14–Cys-29, and Cys-19–Cys-37.

It belongs to the beta-defensin family. Neutrophilic granules.

It is found in the secreted. Has bactericidal activity. Active against E.coli ML35 and S.aureus 502A. In Bos taurus (Bovine), this protein is Beta-defensin 8 (DEFB8).